The primary structure comprises 406 residues: Tryptophan synthase beta chain (406 aa).

An N6-(pyridoxal phosphate)lysine modification is found at lysine 97.

Belongs to the TrpB family. Tetramer of two alpha and two beta chains. The cofactor is pyridoxal 5'-phosphate.

It carries out the reaction (1S,2R)-1-C-(indol-3-yl)glycerol 3-phosphate + L-serine = D-glyceraldehyde 3-phosphate + L-tryptophan + H2O. Its pathway is amino-acid biosynthesis; L-tryptophan biosynthesis; L-tryptophan from chorismate: step 5/5. Functionally, the beta subunit is responsible for the synthesis of L-tryptophan from indole and L-serine. In Lacticaseibacillus casei (strain BL23) (Lactobacillus casei), this protein is Tryptophan synthase beta chain.